The following is a 249-amino-acid chain: Sodium channel modifier 1 (249 aa).

The Bipartite nuclear localization signal motif lies at 4-20 (KREGDDQSQLNILKKRR). The Matrin-type zinc-finger motif lies at 42 to 74 (YSCLVCSHRPVFDTVDMLVVHRKGKRHLEGMKW). Positions 94–103 (YVKAEDDRQE) are enriched in basic and acidic residues. 3 disordered regions span residues 94–116 (YVKA…QTRK), 128–199 (YSSC…PLTE), and 228–249 (ENVE…SESS). The segment covering 104–115 (PSSSAPLLTQTR) has biased composition (polar residues). Over residues 134–149 (KASERSESSSKEHRND) the composition is skewed to basic and acidic residues. Polar residues predominate over residues 150-170 (LANSHLSMRTESNDSRTTVHQ). The span at 230 to 239 (VEFDSDEEEP) shows a compositional bias: acidic residues.

In terms of assembly, component of the minor spliceosome, which splices U12-type introns.

The protein resides in the nucleus. It localises to the nucleoplasm. It is found in the nucleus speckle. As a component of the minor spliceosome, involved in the splicing of U12-type introns in pre-mRNAs. The polypeptide is Sodium channel modifier 1 (scnm1) (Danio rerio (Zebrafish)).